A 148-amino-acid chain; its full sequence is Small ribosomal subunit protein bS16 (148 aa).

The tract at residues 106–148 (QAAARAAAGAEDRPATTPKKAKKSGSAEEAEAAPATDAPAAGQ) is disordered. Residues 137–148 (AAPATDAPAAGQ) are compositionally biased toward low complexity.

Belongs to the bacterial ribosomal protein bS16 family.

In Frankia casuarinae (strain DSM 45818 / CECT 9043 / HFP020203 / CcI3), this protein is Small ribosomal subunit protein bS16.